The primary structure comprises 428 residues: Lysophosphatidic acid phosphatase type 6 (428 aa).

A mitochondrion-targeting transit peptide spans 1–32 (MITGVFSMRLWTPVGVLTSLAYCLHQRRVALA). The segment at 58-168 (RHGARSPLKP…VFIRSTNIFR (111 aa)) is substrate binding. Residue His-59 is the Nucleophile of the active site. Catalysis depends on Asp-335, which acts as the Proton donor.

Belongs to the histidine acid phosphatase family. Monomer. Highly expressed in kidney, heart, small intestine, muscle, liver, prostate, testis, ovary and weakly expressed in thymus and colon.

Its subcellular location is the mitochondrion. It catalyses the reaction a phosphate monoester + H2O = an alcohol + phosphate. The catalysed reaction is 1-(9Z-octadecenoyl)-sn-glycero-3-phosphate + H2O = 1-(9Z-octadecenoyl)-sn-glycerol + phosphate. Hydrolyzes lysophosphatidic acid (LPA) containing a medium length fatty acid chain to the corresponding monoacylglycerol. Has highest activity with lysophosphatidic acid containing myristate (C14:0), monounsaturated oleate (C18:1) or palmitate (C16:0), and lower activity with C18:0 and C6:0 lysophosphatidic acid. This chain is Lysophosphatidic acid phosphatase type 6 (ACP6), found in Homo sapiens (Human).